The primary structure comprises 909 residues: Short transient receptor potential channel 3 (909 aa).

Residues 1–92 are disordered; sequence MSTKVKKCRE…VRGPAFMFGA (92 aa). Over 1 to 447 the chain is Cytoplasmic; the sequence is MSTKVKKCRE…KILRSPFMKF (447 aa). The span at 19–28 shows a compositional bias: acidic residues; it reads PEEEDGEAEG. The segment covering 47–57 has biased composition (pro residues); sequence PPCPRAPPSPG. Residues 58–67 are compositionally biased toward low complexity; that stretch reads PDASSEGSPS. 4 ANK repeats span residues 99–128, 134–163, 165–191, and 220–249; these read AEEE…TLNV, MGQN…LARI, DALL…FAAS, and PDIT…RIER. Ca(2+) is bound at residue E146. The chain crosses the membrane as a helical span at residues 448–465; it reads VAHAASFIIFLGLLVFNA. At 466–496 the chain is on the extracellular side; it reads SDRFEGITTLPNITVIDYPKQIFRVKTTQFT. A glycan (N-linked (GlcNAc...) asparagine) is linked at N477. A helical membrane pass occupies residues 497–515; the sequence is WTEMLIMVWVLGMMWSECK. E513, E516, and N531 together coordinate Ca(2+). Residues 516–528 are Cytoplasmic-facing; sequence ELWLEGPREYIVQ. A helical transmembrane segment spans residues 529–550; the sequence is LWNVLDFGMLSIFIAAFTARFL. Residues 551-594 lie on the Extracellular side of the membrane; the sequence is AFLQATKAQQYVDSHVQESDLSEVTLPPEVQYFTYARDKWLPSD. Residues 595–618 traverse the membrane as a helical segment; it reads PQIISEGLYAIAVVLSFSRIAYIL. Over 619–637 the chain is Cytoplasmic; the sequence is PANESFGPLQISLGRTVKD. Residues 622–651 form an ANK 5 repeat; it reads ESFGPLQISLGRTVKDIFKFMVLFIMVFLA. The helical transmembrane segment at 638-661 threads the bilayer; the sequence is IFKFMVLFIMVFLAFMIGMFILYS. The Extracellular segment spans residues 662-701; that stretch reads YYLGAKVNPAFTTVEESFKTLFWSIFGLSEVTSVVLKYDH. Residues 702 to 727 form a helical membrane-spanning segment; it reads KFIENIGYVLYGIYNVTMVVVLLNML. Topologically, residues 728-909 are cytoplasmic; the sequence is IAMINSSYQE…KLNPSALRCE (182 aa). Ca(2+) contacts are provided by E859, E862, E864, and D871.

Belongs to the transient receptor (TC 1.A.4) family. STrpC subfamily. TRPC3 sub-subfamily. Homotetramer. Interacts with ITPR1, ITPR3, MX1 and RNF24. Interacts with JPH2; the interaction is involved in maintaining Ca(2+) homeostasis in skeletal muscle and is mediated by JPH2 'Ser-165' phosphorylation.

The protein localises to the cell membrane. The catalysed reaction is Ca(2+)(in) = Ca(2+)(out). Its activity is regulated as follows. Activated by diacylglycerol (DAG) in a membrane-delimited fashion, independently of protein kinase C. Activated by inositol 1,4,5-triphosphate receptors (ITPR) with bound IP3. May be activated by internal calcium store depletion. Inhibited by intracellular Ca(2+). Its function is as follows. Forms a receptor-activated non-selective calcium permeant cation channel. May be operated by a phosphatidylinositol second messenger system activated by receptor tyrosine kinases or G-protein coupled receptors. The chain is Short transient receptor potential channel 3 (Trpc3) from Rattus norvegicus (Rat).